Consider the following 65-residue polypeptide: Orally active insecticidal peptide-3 (65 aa).

The signal sequence occupies residues M1–G21. A propeptide spanning residues V22 to R29 is cleaved from the precursor. 3 disulfides stabilise this stretch: C31/C46, C38/C51, and C45/C58. The residue at position 62 (P62) is a Proline amide.

Belongs to the neurotoxin 10 (Hwtx-1) family. 46 (Jztx-7/10/12) subfamily. Expressed by the venom gland.

It localises to the secreted. In terms of biological role, probable ion channel inhibitor. Shows insecticidal activity when injected into mealworms. The protein is Orally active insecticidal peptide-3 of Selenotypus plumipes (Australian featherleg tarantula).